A 681-amino-acid polypeptide reads, in one-letter code: Sorting nexin-41 (681 aa).

Residues 1–12 show a composition bias toward acidic residues; sequence MSTDNLFEDIEQ. The tract at residues 1–94 is disordered; sequence MSTDNLFEDI…HNTSLNNGYP (94 aa). The span at 13-24 shows a compositional bias: polar residues; that stretch reads DNNPSFYGNPSI. One can recognise a PX domain in the interval 113 to 236; the sequence is NDSQLQVDII…KFFDPNYELC (124 aa). A 1,2-diacyl-sn-glycero-3-phospho-(1D-myo-inositol-3-phosphate) is bound by residues R151, S153, K177, and R200. Disordered regions lie at residues 475–505 and 558–597; these read LASR…TENF and TATG…QTSI. Low complexity-rich tracts occupy residues 482–497 and 558–589; these read DNDS…NNND and TATG…QSQS.

The protein belongs to the sorting nexin family.

The protein localises to the endosome membrane. The protein resides in the endomembrane system. Its function is as follows. May be required for cytoplasm to vacuole transport (Cvt) and pexophagy. The chain is Sorting nexin-41 (SNX41) from Candida albicans (strain SC5314 / ATCC MYA-2876) (Yeast).